Here is a 396-residue protein sequence, read N- to C-terminus: Gap junction gamma-1 protein (396 aa).

At Met-1–Lys-22 the chain is on the cytoplasmic side. Residues Ile-23–Tyr-45 traverse the membrane as a helical segment. Residues Asp-46–Arg-75 lie on the Extracellular side of the membrane. A helical transmembrane segment spans residues Phe-76–Ala-95. Topologically, residues Ile-96–Lys-175 are cytoplasmic. The tract at residues Glu-145 to Arg-165 is disordered. The span at Glu-147–Asn-156 shows a compositional bias: basic and acidic residues. A helical transmembrane segment spans residues Ile-176–Leu-198. The Extracellular portion of the chain corresponds to Tyr-199 to Lys-228. A helical membrane pass occupies residues Thr-229–Trp-248. Topologically, residues Glu-249 to Ile-396 are cytoplasmic. Residues Asn-357–Ile-396 form a disordered region. The span at Gly-373–Ile-396 shows a compositional bias: low complexity.

This sequence belongs to the connexin family. Gamma-type subfamily. As to quaternary structure, a connexon is composed of a hexamer of connexins. Interacts with CNST.

The protein resides in the cell membrane. The protein localises to the cell junction. It is found in the gap junction. Its function is as follows. One gap junction consists of a cluster of closely packed pairs of transmembrane channels, the connexons, through which materials of low MW diffuse from one cell to a neighboring cell. The protein is Gap junction gamma-1 protein (GJC1) of Sus scrofa (Pig).